A 1386-amino-acid chain; its full sequence is DNA-directed RNA polymerase subunit beta (1386 aa).

This sequence belongs to the RNA polymerase beta chain family. The RNAP catalytic core consists of 2 alpha, 1 beta, 1 beta' and 1 omega subunit. When a sigma factor is associated with the core the holoenzyme is formed, which can initiate transcription.

It catalyses the reaction RNA(n) + a ribonucleoside 5'-triphosphate = RNA(n+1) + diphosphate. Its function is as follows. DNA-dependent RNA polymerase catalyzes the transcription of DNA into RNA using the four ribonucleoside triphosphates as substrates. This is DNA-directed RNA polymerase subunit beta from Nitratiruptor sp. (strain SB155-2).